The sequence spans 871 residues: Scavenger receptor class F member 2 (871 aa).

Positions 1-20 (MEGAGPRGAGPARRRGAGGP) are disordered. Residues 1 to 43 (MEGAGPRGAGPARRRGAGGPPSPLLPSLLLLLLLWMLPDTVAP) form the signal peptide. Over 44–441 (QELNPRGRNV…ACHLETNQRK (398 aa)) the chain is Extracellular. EGF-like domains follow at residues 71-110 (QGDE…ANCD), 122-153 (CKEL…ARCE), 148-182 (WGAR…AQCA), 183-212 (SACY…RSCN), 213-241 (NQCA…ARCD), and 236-270 (FGAR…KYCR). Disulfide bonds link Cys-75–Cys-86, Cys-80–Cys-98, Cys-100–Cys-109, Cys-126–Cys-134, Cys-128–Cys-141, Cys-143–Cys-152, Cys-156–Cys-163, Cys-158–Cys-170, Cys-172–Cys-181, Cys-185–Cys-193, Cys-187–Cys-200, Cys-202–Cys-211, Cys-215–Cys-222, Cys-217–Cys-229, Cys-231–Cys-240, Cys-244–Cys-251, Cys-246–Cys-258, and Cys-260–Cys-269. Asn-83 carries an N-linked (GlcNAc...) asparagine glycan. N-linked (GlcNAc...) asparagine glycosylation is found at Asn-310 and Asn-365. The EGF-like 7 domain maps to 372–403 (CAFVCADCGSGHCDFQSGRCLCSPGVHGPHCN). 3 disulfides stabilise this stretch: Cys-376/Cys-384, Cys-379/Cys-391, and Cys-393/Cys-402. The N-linked (GlcNAc...) asparagine glycan is linked to Asn-403. The helical transmembrane segment at 442-462 (GVMGAGALLVLLVCLLLSLLG) threads the bilayer. Residues 463-871 (CCCACRGKDP…ELGRAGAPTL (409 aa)) lie on the Cytoplasmic side of the membrane. Ser-551 carries the phosphoserine modification. Residues 570 to 579 (EAPAESRDPE) show a composition bias toward basic and acidic residues. The disordered stretch occupies residues 570 to 871 (EAPAESRDPE…ELGRAGAPTL (302 aa)). Ser-613 carries the phosphoserine modification. Tyr-628 is modified (phosphotyrosine). The segment covering 632–643 (ARREARPARARG) has biased composition (basic and acidic residues). Ser-651, Ser-653, Ser-710, Ser-718, and Ser-742 each carry phosphoserine. Basic and acidic residues predominate over residues 705–725 (TPSDKSAHTVEHGSPRTRDPT). Residues 821 to 831 (PPATETPGPEK) show a composition bias toward low complexity. Residues 844 to 856 (KKTPIQKPPRKKS) show a composition bias toward basic residues. Over residues 861–871 (GELGRAGAPTL) the composition is skewed to low complexity.

Homophilic and heterophilic interaction via its extracellular domain. Interacts with SCARF1. The heterophilic interaction with SCARF1, which is stronger than the homophilic interaction with itself, is suppressed by the presence of SCARF1 ligand such as Ac-LDL. Predominantly expressed in endothelial cells. Expressed in heart, placenta, lung, kidney, spleen, small intestine and ovary.

Its subcellular location is the membrane. Probable adhesion protein, which mediates homophilic and heterophilic interactions. In contrast to SCARF1, it poorly mediates the binding and degradation of acetylated low density lipoprotein (Ac-LDL). The sequence is that of Scavenger receptor class F member 2 (SCARF2) from Homo sapiens (Human).